Consider the following 187-residue polypeptide: V-type ATP synthase subunit E (187 aa).

Belongs to the V-ATPase E subunit family.

In terms of biological role, produces ATP from ADP in the presence of a proton gradient across the membrane. This is V-type ATP synthase subunit E from Geotalea uraniireducens (strain Rf4) (Geobacter uraniireducens).